The primary structure comprises 75 residues: Stewaprin-a (75 aa).

A signal peptide spans 1–24; it reads MSSGGLLLLLGLLTLWAELIPVSG. A WAP domain is found at 27–72; it reads HPKKPGLCPPRPQKPPCVRECKNDWSCPGEQKCCRYGCIFECRDPI. 4 disulfides stabilise this stretch: Cys-34-Cys-60, Cys-43-Cys-64, Cys-47-Cys-59, and Cys-53-Cys-68.

This sequence belongs to the venom waprin family. In terms of tissue distribution, expressed by the venom gland.

The protein localises to the secreted. Damages membranes of susceptible bacteria. Has no hemolytic activity. Not toxic to mice. Does not inhibit the proteinases elastase and cathepsin G. This Hoplocephalus stephensii (Stephens's banded snake) protein is Stewaprin-a.